The primary structure comprises 409 residues: Isovaleryl-CoA dehydrogenase, mitochondrial (409 aa).

The transit peptide at 1–22 directs the protein to the mitochondrion; it reads MAAAQRWLPGILRRGDGLARRL. Residues 151–160 and 184–186 contribute to the FAD site; these read LAMSEPNSGS and WCT. Serine 160 provides a ligand contact to substrate. Substrate is bound by residues 206–207, tyrosine 261, and 268–271; these read SK and DLER. Residue glutamate 270 is the Proton acceptor of the active site. FAD contacts are provided by residues arginine 296, glutamine 307, and 364–368; that span reads QCLGG. A substrate-binding site is contributed by 391 to 392; sequence AG. 393–395 serves as a coordination point for FAD; it reads TSE.

It belongs to the acyl-CoA dehydrogenase family. As to quaternary structure, homodimer. FAD is required as a cofactor.

The protein localises to the mitochondrion. It catalyses the reaction 3-methylbutanoyl-CoA + oxidized [electron-transfer flavoprotein] + H(+) = 3-methylbut-2-enoyl-CoA + reduced [electron-transfer flavoprotein]. It functions in the pathway amino-acid degradation; L-leucine degradation; (S)-3-hydroxy-3-methylglutaryl-CoA from 3-isovaleryl-CoA: step 1/3. In Oryza sativa subsp. japonica (Rice), this protein is Isovaleryl-CoA dehydrogenase, mitochondrial.